The sequence spans 475 residues: Aspartyl/glutamyl-tRNA(Asn/Gln) amidotransferase subunit B (475 aa).

It belongs to the GatB/GatE family. GatB subfamily. As to quaternary structure, heterotrimer of A, B and C subunits.

The catalysed reaction is L-glutamyl-tRNA(Gln) + L-glutamine + ATP + H2O = L-glutaminyl-tRNA(Gln) + L-glutamate + ADP + phosphate + H(+). It catalyses the reaction L-aspartyl-tRNA(Asn) + L-glutamine + ATP + H2O = L-asparaginyl-tRNA(Asn) + L-glutamate + ADP + phosphate + 2 H(+). Its function is as follows. Allows the formation of correctly charged Asn-tRNA(Asn) or Gln-tRNA(Gln) through the transamidation of misacylated Asp-tRNA(Asn) or Glu-tRNA(Gln) in organisms which lack either or both of asparaginyl-tRNA or glutaminyl-tRNA synthetases. The reaction takes place in the presence of glutamine and ATP through an activated phospho-Asp-tRNA(Asn) or phospho-Glu-tRNA(Gln). In Bacillus thuringiensis subsp. konkukian (strain 97-27), this protein is Aspartyl/glutamyl-tRNA(Asn/Gln) amidotransferase subunit B.